The chain runs to 645 residues: Protein disulfide-isomerase A4 (645 aa).

The first 20 residues, 1–20 (MRPRKAFLLLLLLGLVQLLA), serve as a signal peptide directing secretion. Thioredoxin domains follow at residues 21–169 (VAGA…EVSQ) and 158–301 (EEIV…EFLK). The tract at residues 24–58 (AEGPDEDSSNRENAIEDEEEEEEEDDDEEEDDLEV) is disordered. The span at 38–58 (IEDEEEEEEEDDDEEEDDLEV) shows a compositional bias: acidic residues. A CXXC motif is present at residues 91 to 94 (CGHC). 2 disulfides stabilise this stretch: C91–C94 and C206–C209. K366 carries the N6-acetyllysine modification. A Thioredoxin 3 domain is found at 505–636 (FKKGKLKPVI…LSKFIEEHAT (132 aa)). The CXXC signature appears at 555 to 558 (CGHC). Cysteines 555 and 558 form a disulfide. Residues 642–645 (KEEL) carry the Prevents secretion from ER motif.

This sequence belongs to the protein disulfide isomerase family. Part of a large chaperone multiprotein complex comprising DNAJB11, HSP90B1, HSPA5, HYOU, PDIA2, PDIA4, PDIA6, PPIB, SDF2L1, UGGT1 and very small amounts of ERP29, but not, or at very low levels, CALR nor CANX. Component of a complex containing at least CRELD2, MANF, MATN3 and PDIA4. In terms of assembly, (Microbial infection) Interacts with Human astrovirus-1 and Human astrovirus-8 spike protein VP25; this interaction seems to facilitate the uncoating during virus entry into the cell. Does not interact with Human astrovirus-2 spike protein VP25.

The protein resides in the endoplasmic reticulum lumen. The protein localises to the melanosome. The enzyme catalyses Catalyzes the rearrangement of -S-S- bonds in proteins.. The polypeptide is Protein disulfide-isomerase A4 (PDIA4) (Homo sapiens (Human)).